The primary structure comprises 250 residues: Transmembrane ascorbate-dependent reductase CYB561 (250 aa).

An N-acetylmethionine modification is found at Met-1. Residues 1–15 are Cytoplasmic-facing; the sequence is MEHSSASVPAALPYY. A helical membrane pass occupies residues 16 to 36; sequence VAFSQLLGLTVVAVTGAWLGL. In terms of domain architecture, Cytochrome b561 spans 18–219; sequence FSQLLGLTVV…FGVVVLYILA (202 aa). Residues 37–50 are Vesicular-facing; the sequence is YRGGIAWESSLQFN. Residues 51 to 71 traverse the membrane as a helical segment; it reads VHPLCMVIGMIFLQGDALLVY. Positions 52, 72, and 79 each coordinate heme b. Residues 72–83 lie on the Cytoplasmic side of the membrane; sequence RVFRREAKRTTK. L-ascorbate contacts are provided by Lys-79 and Lys-83. Residues 84-104 form a helical membrane-spanning segment; sequence ILHGLLHVFAFIIALVGLVAV. Heme b-binding positions include His-86, 115-118, and His-120; that span reads DLYS. Residues 105–123 lie on the Vesicular side of the membrane; it reads FDYHKKKGYADLYSLHSWC. A helical transmembrane segment spans residues 124–144; it reads GILVFVLYFVQWLVGFSFFLF. Residues 145 to 157 are Cytoplasmic-facing; it reads PGASFSLRSRYRP. Arg-152 contacts L-ascorbate. Residues 158 to 178 form a helical membrane-spanning segment; the sequence is QHIFFGATIFLFSVGTALLGL. Heme b is bound by residues His-159 and Glu-180. Over 179–197 the chain is Vesicular; that stretch reads KEALLFKLGSKYSTFEPEG. A helical transmembrane segment spans residues 198 to 218; the sequence is VLANVLGLLLVCFGVVVLYIL. The Cytoplasmic segment spans residues 219–250; sequence AQADWKRPSQAEEQALSMDFKTLTEGDSPSPQ. Residue Lys-224 participates in heme b binding. A phosphoserine mark is found at Ser-246 and Ser-248.

It depends on heme b as a cofactor. Abundantly distributed in a number of neuroendocrine tissues.

It is found in the cytoplasmic vesicle. The protein localises to the secretory vesicle. Its subcellular location is the chromaffin granule membrane. The catalysed reaction is monodehydro-L-ascorbate radical(out) + L-ascorbate(in) = monodehydro-L-ascorbate radical(in) + L-ascorbate(out). In terms of biological role, transmembrane reductase that uses ascorbate as an electron donor in the cytoplasm and transfers electrons across membranes to reduce monodehydro-L-ascorbate radical in the lumen of secretory vesicles. It is therefore involved the regeneration and homeostasis within secretory vesicles of ascorbate which in turn provides reducing equivalents needed to support the activity of intravesicular enzymes. The chain is Transmembrane ascorbate-dependent reductase CYB561 from Mus musculus (Mouse).